Reading from the N-terminus, the 33-residue chain is Brevinin-2DYc (33 aa).

Cysteines 27 and 33 form a disulfide.

Expressed by the skin glands.

The protein localises to the secreted. Functionally, antimicrobial peptide. A mixture of Brevinin-2DYc/2DYd is active against the Gram-positive bacterium S.aureus (MIC=15 uM) and the Gram-negative bacterium E.coli (MIC=15 uM). This Rana dybowskii (Dybovsky's frog) protein is Brevinin-2DYc.